The sequence spans 133 residues: Nickel-responsive regulator (133 aa).

4 residues coordinate Ni(2+): His76, His87, His89, and Cys95.

It belongs to the transcriptional regulatory CopG/NikR family. As to quaternary structure, homotetramer. It depends on Ni(2+) as a cofactor.

Functionally, transcriptional repressor of the nikABCDE operon. Is active in the presence of excessive concentrations of intracellular nickel. The chain is Nickel-responsive regulator from Escherichia coli (strain SMS-3-5 / SECEC).